The sequence spans 82 residues: U16-lycotoxin-Ls1b (82 aa).

The signal sequence occupies residues 1–22; it reads MSPKVQALLLLVGLITFLEVHA. The propeptide occupies 23–34; it reads EEELSETVESER. 4 disulfide bridges follow: Cys36/Cys51, Cys43/Cys56, Cys50/Cys67, and Cys58/Cys65.

It belongs to the neurotoxin 02 (plectoxin) family. 04 (U16-lycotoxin) subfamily. Expressed by the venom gland.

Its subcellular location is the secreted. This chain is U16-lycotoxin-Ls1b, found in Lycosa singoriensis (Wolf spider).